Reading from the N-terminus, the 471-residue chain is Ubiquitin carboxyl-terminal hydrolase calypso (471 aa).

The region spanning 45 to 276 (GWLELESDPG…IRFNLMAVVP (232 aa)) is the UCH catalytic domain. The Nucleophile role is filled by C131. H213 acts as the Proton donor in catalysis. The interval 307–326 (DEQGESGNGDSQRPDTPTTL) is disordered. Positions 314-326 (NGDSQRPDTPTTL) are enriched in polar residues. Residues 375-403 (NYDKFICTFLSMLAHQGVLGELVSQHLLP) enclose the ULD domain. The interval 405-471 (KKVSGQGAAN…KGRNKCRKRK (67 aa)) is positively charged C-terminal tail required for binding nucleosomes. The segment at 412-471 (AANRISKQSNTASAGGSTTGASASTPKTQQQQAAAAKNGKSPSKTPGRRRKGRNKCRKRK) is disordered. The span at 422–447 (TASAGGSTTGASASTPKTQQQQAAAA) shows a compositional bias: low complexity. Residues 457 to 471 (PGRRRKGRNKCRKRK) are compositionally biased toward basic residues.

Belongs to the peptidase C12 family. BAP1 subfamily. Catalytic component of the polycomb repressive deubiquitinase (PR-DUB) complex, at least composed of caly/calypso, Asx and sba (MBD5/6 homolog). The PR-DUB complex associates with nucleosomes to mediate deubiquitination of histone H2AK118ub1 substrates; the association requires the positively charged C-terminal tail of caly, probably due to direct binding of DNA. Interacts (via ULD domain) with Asx (via DEUBAD domain); the interaction produces a stable heterodimer with a composite binding site for ubiquitin. Homodimerizes (via coiled-coil hinge-region between the UCH and ULD domains) to mediate assembly of 2 copies of the caly-Asx heterodimer into a bisymmetric tetramer; dimerization enhances PR-DUB association with nucleosomes.

Its subcellular location is the nucleus. The enzyme catalyses Thiol-dependent hydrolysis of ester, thioester, amide, peptide and isopeptide bonds formed by the C-terminal Gly of ubiquitin (a 76-residue protein attached to proteins as an intracellular targeting signal).. Its function is as follows. Catalytic component of the polycomb repressive deubiquitinase (PR-DUB) complex, a complex that specifically mediates deubiquitination of histone H2A monoubiquitinated at 'Lys-119' (H2AK118ub1). Mediates bisymmetric organization of the PR-DUB complex and is involved in association with nucleosomes to mediate deubiquitination. Does not deubiquitinate monoubiquitinated histone H2B. Required to maintain the transcriptionally repressive state of homeotic genes throughout development. The PR-DUB complex has weak or no activity toward 'Lys-48'- and 'Lys-63'-linked polyubiquitin chains. Polycomb group (PcG) protein. The polypeptide is Ubiquitin carboxyl-terminal hydrolase calypso (Drosophila sechellia (Fruit fly)).